A 29-amino-acid polypeptide reads, in one-letter code: Cyclotide vibi-D (29 aa).

A cross-link (cyclopeptide (Gly-Asn)) is located at residues 1–29 (GLPVCGETCFGGRCNTPGCTCSYPICTRN). Disulfide bonds link C5–C19, C9–C21, and C14–C26.

Post-translationally, this is a cyclic peptide.

Its function is as follows. Probably participates in a plant defense mechanism. Has moderate levels of cytotoxic activity, active against a human lymphoma cell line with an IC(50) of &gt;30 uM. The polypeptide is Cyclotide vibi-D (Viola biflora (Yellow wood violet)).